A 438-amino-acid chain; its full sequence is Shikimate transporter (438 aa).

12 helical membrane-spanning segments follow: residues 28–48 (FAGAVVDWYDFLLYGITAALV), 64–84 (LAAFATFGVGFLFRPLGGVIF), 109–129 (ALIGILPSFSTIGWWAPILLV), 133–153 (AIQGFAVGGEWGGAALLSVES), 168–188 (VGYGVGLLLSTGLVSLISMMT), 193–213 (FLSWGWRIPFLFSIVLVLGAL), 255–275 (IIALRLCELLTMYIVTAFALN), 287–307 (LFLNIGLLVGGLSCLTIPCFA), 318–337 (VYITGTLIGTLSAFPFFMAL), 341–363 (SIFWIVFFSIMLANIAHDMVVCV), 387–407 (VASVVGGGFTPFIAAALITYF), and 411–431 (WHSVAIYLLAGCLISAMTALL).

The protein belongs to the major facilitator superfamily. Metabolite:H+ Symporter (MHS) family (TC 2.A.1.6) family.

The protein resides in the cell inner membrane. It carries out the reaction shikimate(in) + H(+)(in) = shikimate(out) + H(+)(out). Involved in the uptake of shikimate, an intermediate in the aromatic amino acid biosynthetic pathway. This is Shikimate transporter from Escherichia coli (strain K12).